A 749-amino-acid chain; its full sequence is MSTTIIGFPRLGEFRELKFTTEKYFRKEISEEELLAAAKDLRAKHWNIVKEKGITEIPSNDFSHYDNFLDAAFLFNVVPASVQNLDLSDLERYFALGRGYQGEKGDVRALPMKKWFNTNYHYIVPKFEKDTQVKLAGHKIFDEFQEAKELGLNTRPVLVGPFTFLQLSDFEEGVKADDFVDSFVAAYQEVFAKLADLGATRIQLDEAALVKDLTAEEKALFLNLYNKLLADKKGLEVLFQTYFGDVRDVYADLVNLPVDAIGLDFVEGKKTLELVKGGFPADKTLYVGIVNGKNIWRNNYEKSLTVLEQIPAENIVLTSSCSLLHVPFTTANEEFEPALLNHFAFAVEKLDEIRDLDAIRNGQGSEALAANKELFATERVGENAELRARIAGLTDADYTRLPAFAEREAIQEEAFKLPALPTTTIGSFPQTKEVRAKRLAYRKGELSQKEYDAFLAETIDEWIKWQEDIDFDVLVHGEFERNDMVEYFGQNLSGYLFSKNGWVQSYGMRGVKPPIIWGDVTRLNPITVKWSSYAQSRTNKPVKGMLTGPVTILNWSFPREDISIKDSTLQIALAIKDEVLDLEAAGVKIIQIDEAALREKLPLRRSDWYEDYLDWAIPAFRLVHSTVAPDTQIHTHMCYSEFTDIIPAIDNMDADVISFEASRSNLEILDELKAKNFQTEVGPGVYDIHSPRVPNEGEIDNTIEAILAKVPSKKVWINPDCGLKTRGIPETKESLIRLVEAAKAAREKL.

5-methyltetrahydropteroyltri-L-glutamate is bound by residues 15–18 (RELK) and Lys114. Residues 425 to 427 (IGS) and Glu478 contribute to the L-homocysteine site. L-methionine is bound by residues 425-427 (IGS) and Glu478. Trp555 serves as a coordination point for 5-methyltetrahydropteroyltri-L-glutamate. Asp593 contributes to the L-homocysteine binding site. Residue Asp593 coordinates L-methionine. Glu599 contacts 5-methyltetrahydropteroyltri-L-glutamate. Zn(2+)-binding residues include His636, Cys638, and Glu660. The active-site Proton donor is the His689. A Zn(2+)-binding site is contributed by Cys721.

The protein belongs to the vitamin-B12 independent methionine synthase family. The cofactor is Zn(2+).

The catalysed reaction is 5-methyltetrahydropteroyltri-L-glutamate + L-homocysteine = tetrahydropteroyltri-L-glutamate + L-methionine. The protein operates within amino-acid biosynthesis; L-methionine biosynthesis via de novo pathway; L-methionine from L-homocysteine (MetE route): step 1/1. In terms of biological role, catalyzes the transfer of a methyl group from 5-methyltetrahydrofolate to homocysteine resulting in methionine formation. This is 5-methyltetrahydropteroyltriglutamate--homocysteine methyltransferase from Streptococcus pneumoniae serotype 2 (strain D39 / NCTC 7466).